We begin with the raw amino-acid sequence, 276 residues long: 3-methyl-2-oxobutanoate hydroxymethyltransferase (276 aa).

Mg(2+) contacts are provided by Asp-45 and Asp-84. Residues 45-46 (DS), Asp-84, and Lys-114 each bind 3-methyl-2-oxobutanoate. Residue Glu-116 participates in Mg(2+) binding. The Proton acceptor role is filled by Glu-183.

The protein belongs to the PanB family. As to quaternary structure, homodecamer; pentamer of dimers. Mg(2+) serves as cofactor.

The protein localises to the cytoplasm. The catalysed reaction is 3-methyl-2-oxobutanoate + (6R)-5,10-methylene-5,6,7,8-tetrahydrofolate + H2O = 2-dehydropantoate + (6S)-5,6,7,8-tetrahydrofolate. The protein operates within cofactor biosynthesis; (R)-pantothenate biosynthesis; (R)-pantoate from 3-methyl-2-oxobutanoate: step 1/2. In terms of biological role, catalyzes the reversible reaction in which hydroxymethyl group from 5,10-methylenetetrahydrofolate is transferred onto alpha-ketoisovalerate to form ketopantoate. The protein is 3-methyl-2-oxobutanoate hydroxymethyltransferase of Carboxydothermus hydrogenoformans (strain ATCC BAA-161 / DSM 6008 / Z-2901).